The chain runs to 238 residues: Probable transcriptional regulatory protein CTA_0499 (238 aa).

A disordered region spans residues 1-21 (MAGHSKWANTKHRKERADHKK). The segment covering 9–21 (NTKHRKERADHKK) has biased composition (basic residues).

This sequence belongs to the TACO1 family.

The protein localises to the cytoplasm. In Chlamydia trachomatis serovar A (strain ATCC VR-571B / DSM 19440 / HAR-13), this protein is Probable transcriptional regulatory protein CTA_0499.